The primary structure comprises 165 residues: Glucosamine 6-phosphate N-acetyltransferase (165 aa).

Positions 22 to 165 (FKVRPLAKDD…DDCNFMTQRF (144 aa)) constitute an N-acetyltransferase domain. Residues threonine 44, 92–95 (KFIH), and 104–106 (EDV) each bind substrate. Position 114-119 (114-119 (RQKLGA)) interacts with acetyl-CoA. Substrate contacts are provided by residues 135–136 (YK) and arginine 164.

The protein belongs to the acetyltransferase family. GNA1 subfamily.

It carries out the reaction D-glucosamine 6-phosphate + acetyl-CoA = N-acetyl-D-glucosamine 6-phosphate + CoA + H(+). Its pathway is nucleotide-sugar biosynthesis; UDP-N-acetyl-alpha-D-glucosamine biosynthesis; N-acetyl-alpha-D-glucosamine 1-phosphate from alpha-D-glucosamine 6-phosphate (route I): step 1/2. The polypeptide is Glucosamine 6-phosphate N-acetyltransferase (gna-1) (Caenorhabditis elegans).